Reading from the N-terminus, the 526-residue chain is ATP synthase subunit alpha (526 aa).

G171–T178 lines the ATP pocket.

It belongs to the ATPase alpha/beta chains family. As to quaternary structure, F-type ATPases have 2 components, CF(1) - the catalytic core - and CF(0) - the membrane proton channel. CF(1) has five subunits: alpha(3), beta(3), gamma(1), delta(1), epsilon(1). CF(0) has four main subunits: a, b, b' and c.

Its subcellular location is the cell inner membrane. It carries out the reaction ATP + H2O + 4 H(+)(in) = ADP + phosphate + 5 H(+)(out). Its function is as follows. Produces ATP from ADP in the presence of a proton gradient across the membrane. The alpha chain is a regulatory subunit. This is ATP synthase subunit alpha from Pelodictyon phaeoclathratiforme (strain DSM 5477 / BU-1).